The sequence spans 153 residues: Probable inactive ribonuclease-like protein 13 (153 aa).

An N-terminal signal peptide occupies residues 1-22; sequence MAPDVAWLLVLPLVFRPTLVTG.

It belongs to the pancreatic ribonuclease family.

It localises to the secreted. In terms of biological role, does not exhibit any ribonuclease activity. This is Probable inactive ribonuclease-like protein 13 (Rnase13) from Mus musculus (Mouse).